A 371-amino-acid chain; its full sequence is COP9 signalosome complex subunit 5 (371 aa).

Residues 51–188 form the MPN domain; it reads VKISAVALIK…IGAFRTYPEG (138 aa). Zn(2+) contacts are provided by H134, H136, and D147. The JAMM motif signature appears at 134 to 147; sequence HSHPGYGCWLSGID. Over residues 278–292 the composition is skewed to low complexity; that stretch reads NSSSKLKLKPTQPTT. Disordered stretches follow at residues 278–333 and 352–371; these read NSSS…SRIT and TPLTQSVDDKSAQATVQGRY. The segment covering 293 to 313 has biased composition (basic and acidic residues); the sequence is KGKETTEGSDKKLKKGEKEFS. Residues 323–333 are compositionally biased toward polar residues; it reads NKVTQESSRIT.

This sequence belongs to the peptidase M67A family. CSN5 subfamily. Component of the COP9 signalosome (CSN) complex.

The protein localises to the cytoplasm. It is found in the nucleus. Its function is as follows. Catalytic Component of the COP9 signalosome (CSN) complex that acts as an regulator of the ubiquitin (Ubl) conjugation pathway by mediating the deneddylation of the cullin subunit of SCF-type E3 ubiquitin-protein ligase complexes. The protein is COP9 signalosome complex subunit 5 (RRI1) of Cryptococcus neoformans var. neoformans serotype D (strain B-3501A) (Filobasidiella neoformans).